The primary structure comprises 338 residues: Holliday junction branch migration complex subunit RuvB (338 aa).

Positions 4–187 (ADRLIHAEPQ…FGIPLRLEFY (184 aa)) are large ATPase domain (RuvB-L). ATP-binding positions include R27, G68, K71, T72, T73, 134–136 (EDY), R177, Y187, and R224. T72 lines the Mg(2+) pocket. Positions 188–258 (NVKDLSSIVT…VAELALDMLD (71 aa)) are small ATPAse domain (RuvB-S). Residues 261–338 (SEGFDYMDRK…RHFDIIQPEK (78 aa)) form a head domain (RuvB-H) region. DNA contacts are provided by R297, R316, and R321.

This sequence belongs to the RuvB family. In terms of assembly, homohexamer. Forms an RuvA(8)-RuvB(12)-Holliday junction (HJ) complex. HJ DNA is sandwiched between 2 RuvA tetramers; dsDNA enters through RuvA and exits via RuvB. An RuvB hexamer assembles on each DNA strand where it exits the tetramer. Each RuvB hexamer is contacted by two RuvA subunits (via domain III) on 2 adjacent RuvB subunits; this complex drives branch migration. In the full resolvosome a probable DNA-RuvA(4)-RuvB(12)-RuvC(2) complex forms which resolves the HJ.

It localises to the cytoplasm. It catalyses the reaction ATP + H2O = ADP + phosphate + H(+). In terms of biological role, the RuvA-RuvB-RuvC complex processes Holliday junction (HJ) DNA during genetic recombination and DNA repair, while the RuvA-RuvB complex plays an important role in the rescue of blocked DNA replication forks via replication fork reversal (RFR). RuvA specifically binds to HJ cruciform DNA, conferring on it an open structure. The RuvB hexamer acts as an ATP-dependent pump, pulling dsDNA into and through the RuvAB complex. RuvB forms 2 homohexamers on either side of HJ DNA bound by 1 or 2 RuvA tetramers; 4 subunits per hexamer contact DNA at a time. Coordinated motions by a converter formed by DNA-disengaged RuvB subunits stimulates ATP hydrolysis and nucleotide exchange. Immobilization of the converter enables RuvB to convert the ATP-contained energy into a lever motion, pulling 2 nucleotides of DNA out of the RuvA tetramer per ATP hydrolyzed, thus driving DNA branch migration. The RuvB motors rotate together with the DNA substrate, which together with the progressing nucleotide cycle form the mechanistic basis for DNA recombination by continuous HJ branch migration. Branch migration allows RuvC to scan DNA until it finds its consensus sequence, where it cleaves and resolves cruciform DNA. The chain is Holliday junction branch migration complex subunit RuvB from Shewanella woodyi (strain ATCC 51908 / MS32).